The sequence spans 811 residues: Metal transporter cnnm-1 (811 aa).

Residues 1 to 24 (MSASCLRLLTLSLFILGQCNVTAA) form the signal peptide. N-linked (GlcNAc...) asparagine glycans are attached at residues N20, N49, N61, and N122. At 25-204 (QNGVDDEVTT…KEYFLPLPLQ (180 aa)) the chain is on the extracellular side. In terms of domain architecture, CNNM transmembrane spans 197–376 (YFLPLPLQIA…TDNGQVSNEL (180 aa)). Residues 205-225 (IACIGFLLCLSALFSGLTLGL) traverse the membrane as a helical segment. The Cytoplasmic segment spans residues 226-259 (MSLTPQELELVIKSGAIKEQKCAAKILPVRKKGN). A helical membrane pass occupies residues 260-280 (LLLCSLLLGNVIVNSAISILM). The Extracellular segment spans residues 281–284 (GELT). The chain crosses the membrane as a helical span at residues 285–305 (TGIYALIGSTMGIVIFGEILP). At 306 to 315 (QSICVKKGLE) the chain is on the cytoplasmic side. A helical transmembrane segment spans residues 316–336 (VGAHTISITQLFIFLTFPIAW). The Extracellular portion of the chain corresponds to 337–811 (PVSKLLDCLL…EEEMALLDQP (475 aa)). 2 CBS domains span residues 394-456 (MTKI…NFTV) and 462-530 (YHKH…INDE). N435 and N453 each carry an N-linked (GlcNAc...) asparagine glycan. The disordered stretch occupies residues 741–760 (DVSHNSSAHNSNLSLVEKPG). Over residues 743–755 (SHNSSAHNSNLSL) the composition is skewed to low complexity. 2 N-linked (GlcNAc...) asparagine glycosylation sites follow: N745 and N752.

It belongs to the ACDP family. Highly expressed in the intestine and in neurons, but it is also expressed in a variety of tissues including the pharynx, hypodermis, rectum and in muscles.

It is found in the basolateral cell membrane. In terms of biological role, probable metal transporter. Probably acts redundantly with the other metal transport proteins cnnm-2, cnnm-3, cnnm-4 and cnnm-5 to regulate Mg(2+) homeostasis. Promotes postembryonic gonad development by regulating Mg(2+) levels, probably via AMPK signaling. The sequence is that of Metal transporter cnnm-1 from Caenorhabditis elegans.